The following is a 723-amino-acid chain: Probable alpha-fucosidase A (723 aa).

Positions 1 to 15 (MRSLVLLGMSSLATA) are cleaved as a signal peptide. N-linked (GlcNAc...) asparagine glycans are attached at residues asparagine 77, asparagine 98, asparagine 117, asparagine 171, asparagine 194, asparagine 243, asparagine 334, asparagine 558, asparagine 566, and asparagine 595.

The protein belongs to the glycosyl hydrolase 95 family.

Its subcellular location is the secreted. It carries out the reaction an alpha-L-fucoside + H2O = L-fucose + an alcohol. Functionally, alpha-fucosidase involved in degradation of fucosylated xyloglucans. Hydrolyzes alpha-1,2-linked fucose. This Aspergillus oryzae (strain ATCC 42149 / RIB 40) (Yellow koji mold) protein is Probable alpha-fucosidase A (afcA).